A 790-amino-acid polypeptide reads, in one-letter code: Probable phosphoketolase (790 aa).

This sequence belongs to the XFP family. Requires thiamine diphosphate as cofactor.

The protein is Probable phosphoketolase of Nitrosomonas europaea (strain ATCC 19718 / CIP 103999 / KCTC 2705 / NBRC 14298).